We begin with the raw amino-acid sequence, 337 residues long: Interferon gamma receptor 2 (337 aa).

An N-terminal signal peptide occupies residues 1-21 (MRPTLLWSLLLLLGVFAAAAA). Over 28 to 247 (SQLPAPQHPK…MADASTELQQ (220 aa)) the chain is Extracellular. The 99-residue stretch at 31–129 (PAPQHPKIRL…GALHSAWVTM (99 aa)) folds into the Fibronectin type-III 1 domain. N-linked (GlcNAc...) asparagine glycans are attached at residues N56 and N85. C86 and C94 form a disulfide bridge. Residues N110, N137, N219, and N231 are each glycosylated (N-linked (GlcNAc...) asparagine). Residues 142 to 240 (PPENIEVTPG…NISCYETMAD (99 aa)) form the Fibronectin type-III 2 domain. A disulfide bridge connects residues C209 and C234. The chain crosses the membrane as a helical span at residues 248 to 268 (VILISVGTFSLLSVLAGACFF). Residues 269–337 (LVLKYRGLIK…KEQEDVLQTL (69 aa)) are Cytoplasmic-facing. Positions 276–277 (LI) match the Dileucine internalization motif motif.

This sequence belongs to the type II cytokine receptor family. Heterodimer with IFNGR1, to form the IFNG receptor complex. Interacts (via intracellular domain) with JAK2. In terms of tissue distribution, expressed in T-cells (at protein level).

It is found in the cell membrane. The protein resides in the cytoplasmic vesicle membrane. It localises to the golgi apparatus membrane. Its subcellular location is the endoplasmic reticulum membrane. The protein localises to the cytoplasm. Functionally, associates with IFNGR1 to form a receptor for the cytokine interferon gamma (IFNG). Ligand binding stimulates activation of the JAK/STAT signaling pathway. Required for signal transduction in contrast to other receptor subunit responsible for ligand binding. This Homo sapiens (Human) protein is Interferon gamma receptor 2.